Consider the following 122-residue polypeptide: Large ribosomal subunit protein uL14c (122 aa).

This sequence belongs to the universal ribosomal protein uL14 family. Part of the 50S ribosomal subunit.

Its subcellular location is the plastid. It is found in the chloroplast. In terms of biological role, binds to 23S rRNA. The chain is Large ribosomal subunit protein uL14c from Chlamydomonas reinhardtii (Chlamydomonas smithii).